The chain runs to 954 residues: Glycine dehydrogenase (decarboxylating) (954 aa).

Residue Lys704 is modified to N6-(pyridoxal phosphate)lysine.

It belongs to the GcvP family. The glycine cleavage system is composed of four proteins: P, T, L and H. It depends on pyridoxal 5'-phosphate as a cofactor.

It carries out the reaction N(6)-[(R)-lipoyl]-L-lysyl-[glycine-cleavage complex H protein] + glycine + H(+) = N(6)-[(R)-S(8)-aminomethyldihydrolipoyl]-L-lysyl-[glycine-cleavage complex H protein] + CO2. In terms of biological role, the glycine cleavage system catalyzes the degradation of glycine. The P protein binds the alpha-amino group of glycine through its pyridoxal phosphate cofactor; CO(2) is released and the remaining methylamine moiety is then transferred to the lipoamide cofactor of the H protein. The polypeptide is Glycine dehydrogenase (decarboxylating) (Sinorhizobium medicae (strain WSM419) (Ensifer medicae)).